The chain runs to 303 residues: Probable 5-dehydro-4-deoxyglucarate dehydratase (303 aa).

It belongs to the DapA family.

It catalyses the reaction 5-dehydro-4-deoxy-D-glucarate + H(+) = 2,5-dioxopentanoate + CO2 + H2O. It functions in the pathway carbohydrate acid metabolism; D-glucarate degradation; 2,5-dioxopentanoate from D-glucarate: step 2/2. The protein is Probable 5-dehydro-4-deoxyglucarate dehydratase of Acinetobacter baumannii (strain ATCC 17978 / DSM 105126 / CIP 53.77 / LMG 1025 / NCDC KC755 / 5377).